The primary structure comprises 182 residues: Ferritin heavy chain (182 aa).

M1 carries the N-acetylmethionine modification. An N-acetylthreonine; in Ferritin heavy chain, N-terminally processed modification is found at T2. The Ferritin-like diiron domain occupies 11-160 (QNYHQDSEAA…DHVTNLRKMG (150 aa)). Residues E28, E63, H66, E108, and Q142 each coordinate Fe cation.

It belongs to the ferritin family. As to quaternary structure, oligomer of 24 subunits. There are two types of subunits: L (light) chain and H (heavy) chain. The major chain can be light or heavy, depending on the species and tissue type. The functional molecule forms a roughly spherical shell with a diameter of 12 nm and contains a central cavity into which the insoluble mineral iron core is deposited. Interacts with NCOA4; NCOA4 promotes targeting of the iron-binding ferritin complex to autolysosomes following starvation or iron depletion.

The protein localises to the cytoplasm. Its subcellular location is the lysosome. The protein resides in the cytoplasmic vesicle. It is found in the autophagosome. It catalyses the reaction 4 Fe(2+) + O2 + 4 H(+) = 4 Fe(3+) + 2 H2O. Stores iron in a soluble, non-toxic, readily available form. Important for iron homeostasis. Has ferroxidase activity. Iron is taken up in the ferrous form and deposited as ferric hydroxides after oxidation. Also plays a role in delivery of iron to cells. Mediates iron uptake in capsule cells of the developing kidney. Delivery to lysosomes is mediated by the cargo receptor NCOA4 for autophagic degradation and release of iron. The protein is Ferritin heavy chain (Fth1) of Rattus norvegicus (Rat).